The primary structure comprises 370 residues: MAQSSPPQSLQGLVPLGLLPGLGLGSAIGLHVSGLVLRFVRFLPFYATRRPSQPAGPARSTRTTQATAPRRTRPAPAGGQRQSASEREKLRMRTLARALQELRRFLPPSVAPAGQSLTKIETLRLAIRYIGHLSALLGLSEDSLRRRRRRSADAAFSHRCPQCPDGGSPSQAQMLGPSLGSAMSSGVSWGCPPACPGPLISPENLGNRISNVDPRVTPPYCPQIQSPLHQSLERAADSSPWAPPQACPGMQMSPEPRNKTGHWTQSTEPAELTKVYQSLSVSPEPRLSLGSPLLLPRPSCQRLQPQPQPQPQWGCWGHDAEVLSTSEDQGSSPALQLPVASPTPSSGLQLSGCPELWQEDLEGPPLNIFY.

Disordered regions lie at residues 51-89 (PSQP…EREK), 231-265 (SLER…HWTQ), and 325-350 (TSED…GLQL). Positions 57 to 77 (PARSTRTTQATAPRRTRPAPA) are enriched in low complexity. Residues 79-133 (GQRQSASEREKLRMRTLARALQELRRFLPPSVAPAGQSLTKIETLRLAIRYIGHL) form the bHLH domain. The span at 325-334 (TSEDQGSSPA) shows a compositional bias: polar residues. The may contain a degradation domain stretch occupies residues 326 to 330 (SEDQG).

Degraded by the proteasome. Post-translationally, phosphorylated.

It localises to the nucleus. Functionally, transcription factor with important role in somitogenesis. Defines the rostrocaudal patterning of the somite by participating in distinct Notch pathways. Also regulates the FGF signaling pathway. Specifies the rostral half of the somites. Generates rostro-caudal polarity of somites by down-regulating in the presumptive rostral domain DLL1, a Notch ligand. Participates in the segment border formation by activating in the anterior presomitic mesoderm LFNG, a negative regulator of DLL1-Notch signaling. Acts as a strong suppressor of Notch activity. Together with MESP1 is involved in the epithelialization of somitic mesoderm and in the development of cardiac mesoderm. May play a role with Tcf15 in the differentiation of myotomal and sclerotomal cells by regulating Pax family genes. Also controls the expression of the protocadherin PCDH8/PAPC, EPHA4, RIPPLY2, NOTCH2, FGFR1, and CER1. Binds to the E-boxes within the EPH4A and RIPPLY2 enhancers. In Mus musculus (Mouse), this protein is Mesoderm posterior protein 2 (Mesp2).